We begin with the raw amino-acid sequence, 542 residues long: CTP synthase (542 aa).

The tract at residues 1–265 is amidoligase domain; sequence MTRFIFITGG…DVQVCRHFHL (265 aa). S13 is a CTP binding site. UTP is bound at residue S13. ATP contacts are provided by residues 14–19 and D71; that span reads SLGKGL. 2 residues coordinate Mg(2+): D71 and E139. CTP-binding positions include 146–148, 186–191, and K222; these read DIE and KTKPTQ. UTP is bound by residues 186–191 and K222; that span reads KTKPTQ. The Glutamine amidotransferase type-1 domain occupies 291–541; that stretch reads TIAVVGKYTS…VQAAITQSRL (251 aa). G353 contributes to the L-glutamine binding site. Residue C380 is the Nucleophile; for glutamine hydrolysis of the active site. Residues 381–384, E404, and R469 contribute to the L-glutamine site; that span reads FGMQ. Catalysis depends on residues H514 and E516.

The protein belongs to the CTP synthase family. In terms of assembly, homotetramer.

The enzyme catalyses UTP + L-glutamine + ATP + H2O = CTP + L-glutamate + ADP + phosphate + 2 H(+). It carries out the reaction L-glutamine + H2O = L-glutamate + NH4(+). The catalysed reaction is UTP + NH4(+) + ATP = CTP + ADP + phosphate + 2 H(+). The protein operates within pyrimidine metabolism; CTP biosynthesis via de novo pathway; CTP from UDP: step 2/2. With respect to regulation, allosterically activated by GTP, when glutamine is the substrate; GTP has no effect on the reaction when ammonia is the substrate. The allosteric effector GTP functions by stabilizing the protein conformation that binds the tetrahedral intermediate(s) formed during glutamine hydrolysis. Inhibited by the product CTP, via allosteric rather than competitive inhibition. Its function is as follows. Catalyzes the ATP-dependent amination of UTP to CTP with either L-glutamine or ammonia as the source of nitrogen. Regulates intracellular CTP levels through interactions with the four ribonucleotide triphosphates. The protein is CTP synthase of Rhodospirillum rubrum (strain ATCC 11170 / ATH 1.1.1 / DSM 467 / LMG 4362 / NCIMB 8255 / S1).